A 1957-amino-acid polypeptide reads, in one-letter code: MGENEDEKQAQAGQVFENFVQASTCKGTLQAFNILTRHLDLDPLDHRNFYSKLKSKVTTWKAKALWYKLDKRGSHKEYKRGKSCTNTKCLIVGGGPCGLRTAIELAYLGAKVVVVEKRDSFSRNNVLHLWPFTIHDLRGLGAKKFYGKFCAGSIDHISIRQLQLILFKVALMLGVEIHVNVEFVKVLEPPEDQENQKIGWRAEFLPTDHSLSEFEFDVIIGADGRRNTLEGFRRKEFRGKLAIAITANFINRNSTAEAKVEEISGVAFIFNQKFFQDLKEETGIDLENIVYYKDCTHYFVMTAKKQSLLDKGVIINDYIDTEMLLCAENVNQDNLLSYAREAADFATNYQLPSLDFAMNHYGQPDVAMFDFTCMYASENAALVRERQAHQLLVALVGDSLLEPFWPMGTGCARGFLAAFDTAWMVKSWNQGTPPLELLAERESLYRLLPQTTPENINKNFEQYTLDPGTRYPNLNSHCVRPHQVKHLYITKELEHYPLERLGSVRRSVNLSRKESDIRPSKLLTWCQQQTEGYQHVNVTDLTTSWRSGLALCAIIHRFRPELINFDSLNEDDAVENNQLAFDVAEREFGIPPVTTGKEMASAQEPDKLSMVMYLSKFYELFRGTPLRPVDSWRKNYGENADLSLAKSSISNNYLNLTFPRKRTPRVDGQTGENDMNKRRRKGFTNLDEPSNFSSRSLGSNQECGSSKEGGNQNKVKSMANQLLAKFEESTRNPSLMKQERRVSGIGKPVLCSSSGPPVHSCCPKPEEATPSPSPPLKRQFPSVVVTGHVLRELKQVSAGSECLSRPWRARAKSDLQLGGTENFATLPSTRPRAQALSGVLWRLQQVEEKILQKRAQNLANREFHTKNIKEKAAHLASMFGHGDFPQNKLLSKGLSHTHPPSPPSRLPSPDPAASSSPSTVDSASPARKEKKSPSGFHFHPSHLRTVHPQLTVGKVSSGIGAAAEVLVNLYMNDHRPKAQATSPDLESMRKSFPLNLGGSDTCYFCKKRVYVMERLSAEGHFFHRECFRCSICATTLRLAAYTFDCDEGKFYCKPHFIHCKTNSKQRKRRAELKQQREEEATWQEQEAPRRDTPTESSCAVAAIGTLEGSPPDEPTSPKRPKSISEPQHSDAEGDAASPLPSEWTSVRISPGEEAAGQDVLAVRVLVTSEDSSSDTESDYGGSEGSHTEPCEEKPWRPGSPHLPHTSLGEALSRAVSPQCPEEPRAVHAALQRANSFQSPTPSKYQNWRREFWWSLTPVNKRTMSPPKDPSPSLPLPSSSSHSSSPPSSSSTSVSGNAPDGSSPPQMTASEPLSQVSRGHPSPPTPNFRRRAVAQGAPREIPLYLPHHPKPEWAEYCLVSPGEDGLSDPAEMTSDECQPAEAPLGDIGSNHRDPHPIWGKDRSWTGQELSPLAGEDREKGSTGARKEEEGGPVLVKEKLGLKKLVLTQEQKTMLLDWNDSIPESVHLKAGERISQKSAENGRGGRVLKPVRPLLLPRAAGEPLPTQRGAQEKMGTPAEQAQGERNVPPPKSPLRLIANAIRRSLEPLLSNSEGGKKAWAKQESKTLPAQACTRSFSLRKTNSNKDGDQHSPGRNQSSAFSPPDPALRTHSLPNRPSKVFPALRSPPCSKIEDVPTLLEKVSLQENFPDASKPPKKRISLFSSLRLKDKSFESFLQESRQRKDIRDLFGSPKRKVLPEDSAQALEKLLQPFKSTSLRQAAPPPPPPPPPPPPPPTAGGADSKNFPLRAQVTEASSSASSTSSSSADEEFDPQLSLQLKEKKTLRRRKKLEKAMKQLVKQEELKRLYKAQAIQRQLEEVEERQRASEIQGVRLEKALRGEADSGTQDEAQLLQEWFKLVLEKNKLMRYESELLIMAQELELEDHQSRLEQKLREKMLKEESQKDEKDLNEEQEVFTELMQVIEQRDKLVDSLEEQRIREKAEDQHFESFVFSRGCQLSRT.

Positions 2 to 494 (GENEDEKQAQ…KHLYITKELE (493 aa)) are monooxygenase domain. FAD is bound by residues C97, 116–118 (EKR), 123–125 (RNN), F183, Y298, and D398. Positions 516–619 (DIRPSKLLTW…MVMYLSKFYE (104 aa)) constitute a Calponin-homology (CH) domain. S631 is subject to Phosphoserine. The Nuclear localization signal signature appears at 660 to 681 (RKRTPRVDGQTGENDMNKRRRK). 2 disordered regions span residues 660–714 (RKRT…NQNK) and 886–942 (QNKL…HPSH). A compositionally biased stretch (polar residues) spans 687–714 (DEPSNFSSRSLGSNQECGSSKEGGNQNK). The segment covering 899-910 (PPSPPSRLPSPD) has biased composition (pro residues). Positions 911-925 (PAASSSPSTVDSASP) are enriched in low complexity. The 63-residue stretch at 1000 to 1062 (DTCYFCKKRV…KPHFIHCKTN (63 aa)) folds into the LIM zinc-binding domain. Positions 1002, 1005, 1023, 1026, 1029, 1032, 1052, and 1055 each coordinate Zn(2+). Disordered regions lie at residues 1070 to 1143 (AELK…PSEW), 1168 to 1243 (SEDS…TPSK), 1258 to 1345 (VNKR…LYLP), 1361 to 1431 (GEDG…EGGP), 1467 to 1626 (KAGE…SPPC), and 1675 to 1779 (ESRQ…KEKK). Positions 1185–1195 (SHTEPCEEKPW) are enriched in basic and acidic residues. Polar residues predominate over residues 1232–1243 (RANSFQSPTPSK). Residues 1275-1294 (LPSSSSHSSSPPSSSSTSVS) show a composition bias toward low complexity. Residues 1302 to 1316 (SPPQMTASEPLSQVS) are compositionally biased toward polar residues. The tract at residues 1324 to 1363 (TPNFRRRAVAQGAPREIPLYLPHHPKPEWAEYCLVSPGED) is interaction with MAPK1. Composition is skewed to basic and acidic residues over residues 1388 to 1402 (SNHR…KDRS) and 1413 to 1431 (GEDR…EGGP). Positions 1485-1496 (VLKPVRPLLLPR) are enriched in low complexity. Over residues 1552 to 1562 (GGKKAWAKQES) the composition is skewed to basic and acidic residues. The segment covering 1570 to 1579 (CTRSFSLRKT) has biased composition (polar residues). A Phosphoserine modification is found at S1688. A compositionally biased stretch (pro residues) spans 1718–1733 (APPPPPPPPPPPPPPT). Over residues 1751-1762 (ASSSASSTSSSS) the composition is skewed to low complexity. The region spanning 1796–1945 (KQEELKRLYK…EKAEDQHFES (150 aa)) is the bMERB domain.

This sequence belongs to the Mical family. As to quaternary structure, interacts with PLXNA4. Interacts with RAB1B. Interacts with MAPK1/ERK2. Interacts with RAB35, RAB8A, RAB10, RAB13 and RAB15 (in their GTP-bound forms); binding to RAB35 is of low affinity compared to other Rab proteins; at least in case of RAB8A may bind 2 molecules of RAB8A simultaneously through a high and a low affinity binding site, respectively. May interact with MAPK1/ERK2. Interacts with CORO1C; this interaction recruits MICAL2 to the actin filaments. Requires FAD as cofactor.

The protein resides in the nucleus. It is found in the cytoplasm. The catalysed reaction is L-methionyl-[F-actin] + NADPH + O2 + H(+) = L-methionyl-(R)-S-oxide-[F-actin] + NADP(+) + H2O. Its activity is regulated as follows. Specifically inhibited by CCG-1423, a small molecule inhibitor of SRF:MKL1/MRTF-A-dependent transcription. Its function is as follows. Methionine monooxygenase that promotes depolymerization of F-actin by mediating oxidation of residues 'Met-44' and 'Met-47' on actin to form methionine-sulfoxide, resulting in actin filament disassembly and preventing repolymerization. Regulates the disassembly of branched actin networks also by oxidizing ARP3B-containing ARP2/3 complexes leading to ARP3B dissociation from the network. Acts as a key regulator of the SRF signaling pathway elicited by nerve growth factor and serum: mediates oxidation and subsequent depolymerization of nuclear actin, leading to increase MKL1/MRTF-A presence in the nucleus and promote SRF:MKL1/MRTF-A-dependent gene transcription. Does not activate SRF:MKL1/MRTF-A through RhoA. This is [F-actin]-monooxygenase MICAL2 from Homo sapiens (Human).